A 332-amino-acid chain; its full sequence is MSTVKEQLIQNLAPDEKQSRCKITVVGVGNVGMACAISILLKGLADELALVDADENKLKGEALDLLHGSLFLSTPKIVFGKDYSVSANSKLVIITAGARMVSGESRLALLQRNVTSMKAIVPGVIQNSPDCKIMIVTNPVDILTYVVWKISGLPVSSVIGSGCNLDSARFRYLIGEKLGVNPSSCHGWVLGEHGDSSVPIWSGVNIAGVTLKSLNPAIGSDSDKEQWKTVHKQVVDGGYEVLNLKGYTSWAIALSVTDIAASILKNLKRVHAVTTLVKGLYGIKEEIFLSIPCVLGQSGITDLVKVNMNTEEEALFKKSCDILWNIQKDLQL.

Serine 2 is modified (blocked amino end (Ser)). NAD(+) contacts are provided by residues 29–57 and arginine 99; that span reads GNVGMACAISILLKGLADELALVDADENK. Residues arginine 106, asparagine 138, and arginine 169 each coordinate substrate. Asparagine 138 serves as a coordination point for NAD(+). Histidine 193 acts as the Proton acceptor in catalysis. A substrate-binding site is contributed by threonine 248.

It belongs to the LDH/MDH superfamily. LDH family. As to quaternary structure, homotetramer. Interacts with RABL2/RABL2A; binds preferentially to GTP-bound RABL2.

The protein resides in the cytoplasm. The enzyme catalyses (S)-lactate + NAD(+) = pyruvate + NADH + H(+). It participates in fermentation; pyruvate fermentation to lactate; (S)-lactate from pyruvate: step 1/1. Possible role in sperm motility. In Rattus norvegicus (Rat), this protein is L-lactate dehydrogenase C chain (Ldhc).